Here is a 571-residue protein sequence, read N- to C-terminus: Urease subunit alpha (571 aa).

In terms of domain architecture, Urease spans 133-571; it reads GGIDTHVHFI…LPLTQRYFLF (439 aa). Residues H138, H140, and K221 each contribute to the Ni(2+) site. K221 is modified (N6-carboxylysine). H223 is a binding site for substrate. The Ni(2+) site is built by H250 and H276. The active-site Proton donor is H324. Residue D364 participates in Ni(2+) binding.

This sequence belongs to the metallo-dependent hydrolases superfamily. Urease alpha subunit family. Heterotrimer of UreA (gamma), UreB (beta) and UreC (alpha) subunits. Three heterotrimers associate to form the active enzyme. Requires Ni cation as cofactor. In terms of processing, carboxylation allows a single lysine to coordinate two nickel ions.

It is found in the cytoplasm. The enzyme catalyses urea + 2 H2O + H(+) = hydrogencarbonate + 2 NH4(+). The protein operates within nitrogen metabolism; urea degradation; CO(2) and NH(3) from urea (urease route): step 1/1. The protein is Urease subunit alpha of Staphylococcus aureus (strain USA300).